We begin with the raw amino-acid sequence, 197 residues long: Penicillin-binding protein activator LpoB (197 aa).

An N-terminal signal peptide occupies residues 1–17 (MIKRMSGIALAALLLSG). Cysteine 18 carries N-palmitoyl cysteine lipidation. Residue cysteine 18 is the site of S-diacylglycerol cysteine attachment. The segment at 23-57 (PRGETPSQPPAPTTPAKPSVVPTPTPPVVTPVPQP) is disordered. Residues 29–57 (SQPPAPTTPAKPSVVPTPTPPVVTPVPQP) show a composition bias toward pro residues.

This sequence belongs to the LpoB family. Interacts with PBP1b.

Its subcellular location is the cell outer membrane. In terms of biological role, regulator of peptidoglycan synthesis that is essential for the function of penicillin-binding protein 1B (PBP1b). In Edwardsiella piscicida, this protein is Penicillin-binding protein activator LpoB.